The following is a 185-amino-acid chain: Ribosome-recycling factor (185 aa).

Belongs to the RRF family.

Its subcellular location is the cytoplasm. Responsible for the release of ribosomes from messenger RNA at the termination of protein biosynthesis. May increase the efficiency of translation by recycling ribosomes from one round of translation to another. The chain is Ribosome-recycling factor from Bacillus cytotoxicus (strain DSM 22905 / CIP 110041 / 391-98 / NVH 391-98).